We begin with the raw amino-acid sequence, 117 residues long: Large ribosomal subunit protein uL22 (117 aa).

This sequence belongs to the universal ribosomal protein uL22 family. In terms of assembly, part of the 50S ribosomal subunit.

This protein binds specifically to 23S rRNA; its binding is stimulated by other ribosomal proteins, e.g. L4, L17, and L20. It is important during the early stages of 50S assembly. It makes multiple contacts with different domains of the 23S rRNA in the assembled 50S subunit and ribosome. Functionally, the globular domain of the protein is located near the polypeptide exit tunnel on the outside of the subunit, while an extended beta-hairpin is found that lines the wall of the exit tunnel in the center of the 70S ribosome. This Staphylococcus aureus (strain USA300) protein is Large ribosomal subunit protein uL22.